The primary structure comprises 206 residues: Large ribosomal subunit protein uL4 (206 aa).

Residues 63 to 97 (MYKQKGTGRARHHSARAPQFRGGGKAHGPVVRSHE) are disordered. Positions 64–77 (YKQKGTGRARHHSA) are enriched in basic residues.

Belongs to the universal ribosomal protein uL4 family. As to quaternary structure, part of the 50S ribosomal subunit.

Functionally, one of the primary rRNA binding proteins, this protein initially binds near the 5'-end of the 23S rRNA. It is important during the early stages of 50S assembly. It makes multiple contacts with different domains of the 23S rRNA in the assembled 50S subunit and ribosome. Its function is as follows. Forms part of the polypeptide exit tunnel. The polypeptide is Large ribosomal subunit protein uL4 (Rhizobium johnstonii (strain DSM 114642 / LMG 32736 / 3841) (Rhizobium leguminosarum bv. viciae)).